Reading from the N-terminus, the 102-residue chain is Small ribosomal subunit protein uS10 (102 aa).

It belongs to the universal ribosomal protein uS10 family. Part of the 30S ribosomal subunit.

Functionally, involved in the binding of tRNA to the ribosomes. The protein is Small ribosomal subunit protein uS10 of Saccharolobus islandicus (strain M.16.4 / Kamchatka #3) (Sulfolobus islandicus).